Here is a 655-residue protein sequence, read N- to C-terminus: Very long-chain specific acyl-CoA dehydrogenase, mitochondrial (655 aa).

A mitochondrion-targeting transit peptide spans 1–40; the sequence is MQAARIAPSLGRQLLRFGGGSSRPTALLGQPWPGPARRPY. A catalytic region spans residues 41–482; sequence AGGAAQLALD…ALQGCMDKGK (442 aa). An N6-acetyllysine modification is found at Lys-51. Lys-71 is modified (N6-acetyllysine; alternate). Residue Lys-71 is modified to N6-succinyllysine; alternate. Position 195 is an N6-succinyllysine (Lys-195). 214-223 provides a ligand contact to FAD; it reads FCLTEPSSGS. Cys-237 is modified (S-nitrosocysteine). Lys-239 is modified (N6-acetyllysine; alternate). The residue at position 239 (Lys-239) is an N6-succinyllysine; alternate. 249 to 251 provides a ligand contact to FAD; the sequence is WIS. N6-acetyllysine; alternate occurs at positions 276 and 278. Residues Lys-276 and Lys-278 each carry the N6-succinyllysine; alternate modification. Lys-298 is modified (N6-acetyllysine). The residue at position 331 (Lys-331) is an N6-acetyllysine; alternate. Residue Lys-331 is modified to N6-succinyllysine; alternate. Lys-372 bears the N6-succinyllysine mark. 461-463 is a binding site for substrate; it reads FEG. The active-site Proton acceptor is Glu-462. 464–466 is a binding site for FAD; sequence TND. The residue at position 482 (Lys-482) is an N6-acetyllysine; alternate. Lys-482 carries the post-translational modification N6-succinyllysine; alternate. A membrane-anchoring region spans residues 483–516; that stretch reads ELSGLGSALKNPFGNAGLLLGEAGKQLRRRAGLG. Phosphoserine occurs at positions 517 and 522. At Lys-550 the chain carries N6-acetyllysine. Lys-556 carries the post-translational modification N6-acetyllysine; alternate. Lys-556 is subject to N6-succinyllysine; alternate. FAD is bound at residue Gln-562. N6-succinyllysine is present on Lys-639.

This sequence belongs to the acyl-CoA dehydrogenase family. As to quaternary structure, homodimer. Homodimerizes after import into the mitochondrion. FAD is required as a cofactor. S-nitrosylation at Cys-237 in liver improves catalytic efficiency.

Its subcellular location is the mitochondrion inner membrane. The catalysed reaction is a very-long-chain 2,3-saturated fatty acyl-CoA + oxidized [electron-transfer flavoprotein] + H(+) = a very-long-chain (2E)-enoyl-CoA + reduced [electron-transfer flavoprotein]. It catalyses the reaction dodecanoyl-CoA + oxidized [electron-transfer flavoprotein] + H(+) = (2E)-dodecenoyl-CoA + reduced [electron-transfer flavoprotein]. It carries out the reaction tetradecanoyl-CoA + oxidized [electron-transfer flavoprotein] + H(+) = (2E)-tetradecenoyl-CoA + reduced [electron-transfer flavoprotein]. The enzyme catalyses oxidized [electron-transfer flavoprotein] + hexadecanoyl-CoA + H(+) = (2E)-hexadecenoyl-CoA + reduced [electron-transfer flavoprotein]. The catalysed reaction is octadecanoyl-CoA + oxidized [electron-transfer flavoprotein] + H(+) = (2E)-octadecenoyl-CoA + reduced [electron-transfer flavoprotein]. It catalyses the reaction eicosanoyl-CoA + oxidized [electron-transfer flavoprotein] + H(+) = (2E)-eicosenoyl-CoA + reduced [electron-transfer flavoprotein]. It carries out the reaction docosanoyl-CoA + oxidized [electron-transfer flavoprotein] + H(+) = (2E)-docosenoyl-CoA + reduced [electron-transfer flavoprotein]. The enzyme catalyses tetracosanoyl-CoA + oxidized [electron-transfer flavoprotein] + H(+) = (2E)-tetracosenoyl-CoA + reduced [electron-transfer flavoprotein]. The protein operates within lipid metabolism; mitochondrial fatty acid beta-oxidation. Its function is as follows. Very long-chain specific acyl-CoA dehydrogenase is one of the acyl-CoA dehydrogenases that catalyze the first step of mitochondrial fatty acid beta-oxidation, an aerobic process breaking down fatty acids into acetyl-CoA and allowing the production of energy from fats. The first step of fatty acid beta-oxidation consists in the removal of one hydrogen from C-2 and C-3 of the straight-chain fatty acyl-CoA thioester, resulting in the formation of trans-2-enoyl-CoA. Among the different mitochondrial acyl-CoA dehydrogenases, very long-chain specific acyl-CoA dehydrogenase acts specifically on acyl-CoAs with saturated 12 to 24 carbons long primary chains. This is Very long-chain specific acyl-CoA dehydrogenase, mitochondrial from Macaca fascicularis (Crab-eating macaque).